The following is a 494-amino-acid chain: 3-octaprenyl-4-hydroxybenzoate carboxy-lyase (494 aa).

Mn(2+) is bound at residue Asn172. Prenylated FMN contacts are provided by residues 175 to 177 (IYR), 189 to 191 (RWL), and 194 to 195 (RG). Glu238 contacts Mn(2+). The Proton donor role is filled by Asp287.

This sequence belongs to the UbiD family. In terms of assembly, homohexamer. Requires prenylated FMN as cofactor. Mn(2+) is required as a cofactor.

Its subcellular location is the cell membrane. The enzyme catalyses a 4-hydroxy-3-(all-trans-polyprenyl)benzoate + H(+) = a 2-(all-trans-polyprenyl)phenol + CO2. It functions in the pathway cofactor biosynthesis; ubiquinone biosynthesis. Its function is as follows. Catalyzes the decarboxylation of 3-octaprenyl-4-hydroxy benzoate to 2-octaprenylphenol, an intermediate step in ubiquinone biosynthesis. This is 3-octaprenyl-4-hydroxybenzoate carboxy-lyase from Erwinia tasmaniensis (strain DSM 17950 / CFBP 7177 / CIP 109463 / NCPPB 4357 / Et1/99).